The primary structure comprises 435 residues: Zinc metalloproteinase/disintegrin (435 aa).

A propeptide spanning residues 1 to 26 (KMCGVTQNWESYESTKKASQLNLTPE) is cleaved from the precursor. Position 27 is a pyrrolidone carboxylic acid (Q27). The region spanning 33–227 (RYIKLGIFVD…HNFQCILNAP (195 aa)) is the Peptidase M12B domain. N-linked (GlcNAc...) asparagine glycosylation occurs at N115. Intrachain disulfides connect C144-C222, C184-C206, and C186-C189. Residue H169 participates in Zn(2+) binding. Residue E170 is part of the active site. Zn(2+) contacts are provided by H173 and H179. A propeptide spanning residues 228 to 243 (LRTDTVSTPVSGNELL) is cleaved from the precursor. The region spanning 235–318 (TPVSGNELLE…DCPTDDFHRN (84 aa)) is the Disintegrin domain. Positions 237, 240, 242, 244, 247, and 250 each coordinate Ca(2+). Disulfide bonds link C249-C264, C251-C259, C258-C281, C272-C278, C277-C303, and C290-C310. Positions 296–298 (ECD) match the D/ECD-tripeptide motif.

The protein belongs to the venom metalloproteinase (M12B) family. P-III subfamily. P-IIIb sub-subfamily. Monomer. It depends on Zn(2+) as a cofactor. The N-terminus of the metalloproteinase is blocked. As to expression, expressed by the venom gland.

The protein localises to the secreted. Inhibited by EDTA. Cleaves the alpha chain of fibrinogen (FGA) preferentially and cleaves the beta chain (FGB) either on longer incubation or at high concentrations. Induces apoptosis of endothelial cells (prior to cell detachment). In terms of biological role, disintegrin: inhibits platelet aggregation induced by ADP, thrombin, platelet-activating factor and collagen. Acts by inhibiting fibrinogen interaction with platelet receptors GPIIb/GPIIIa (ITGA2B/ITGB3). The polypeptide is Zinc metalloproteinase/disintegrin (Craspedocephalus gramineus (Bamboo pit viper)).